A 914-amino-acid chain; its full sequence is Protein translocase subunit SecA (914 aa).

Residues glutamine 87, 105 to 109 (GEGKT), and aspartate 500 contribute to the ATP site. Positions 898, 900, 909, and 910 each coordinate Zn(2+).

The protein belongs to the SecA family. In terms of assembly, monomer and homodimer. Part of the essential Sec protein translocation apparatus which comprises SecA, SecYEG and auxiliary proteins SecDF-YajC and YidC. It depends on Zn(2+) as a cofactor.

The protein localises to the cell inner membrane. It is found in the cytoplasm. It catalyses the reaction ATP + H2O + cellular proteinSide 1 = ADP + phosphate + cellular proteinSide 2.. Its function is as follows. Part of the Sec protein translocase complex. Interacts with the SecYEG preprotein conducting channel. Has a central role in coupling the hydrolysis of ATP to the transfer of proteins into and across the cell membrane, serving as an ATP-driven molecular motor driving the stepwise translocation of polypeptide chains across the membrane. This Acidithiobacillus ferrooxidans (strain ATCC 23270 / DSM 14882 / CIP 104768 / NCIMB 8455) (Ferrobacillus ferrooxidans (strain ATCC 23270)) protein is Protein translocase subunit SecA.